The sequence spans 401 residues: Probable acid ceramidase (401 aa).

Positions 1–22 are cleaved as a signal peptide; it reads MKPVAISLSLLLLVTLLPGSEQ. Residues Asn-101, Asn-303, and Asn-371 are each glycosylated (N-linked (GlcNAc...) asparagine).

Belongs to the acid ceramidase family.

The enzyme catalyses an N-acyl-sphingoid base + H2O = a sphingoid base + a fatty acid. The catalysed reaction is an N-acylsphing-4-enine + H2O = sphing-4-enine + a fatty acid. It catalyses the reaction an N-acyl-15-methylhexadecasphing-4-enine + H2O = 15-methylhexadecasphing-4-enine + a fatty acid. Catalyzes the hydrolysis of ceramides into sphingoid base and free fatty acid. C.elegans contain specific sphingoid bases, which are unique or different in structure compared to the sphingoid bases found in other animals. Two examples of these distinctive compounds are: 15-methylhexadecasphinganine and 15-methylhexadecasphing-4-enine. The protein is Probable acid ceramidase of Caenorhabditis elegans.